Here is a 156-residue protein sequence, read N- to C-terminus: Small ribosomal subunit protein uS7 (156 aa).

Belongs to the universal ribosomal protein uS7 family. In terms of assembly, part of the 30S ribosomal subunit. Contacts proteins S9 and S11.

In terms of biological role, one of the primary rRNA binding proteins, it binds directly to 16S rRNA where it nucleates assembly of the head domain of the 30S subunit. Is located at the subunit interface close to the decoding center, probably blocks exit of the E-site tRNA. The sequence is that of Small ribosomal subunit protein uS7 from Geobacter sulfurreducens (strain ATCC 51573 / DSM 12127 / PCA).